The following is a 562-amino-acid chain: Protein TBF1 (562 aa).

The tract at residues 376 to 414 is disordered; sequence ASMSNSSSGPHSSHNNSSNSNNNGSIGLRKPKAKRTWSK. Positions 377–400 are enriched in low complexity; the sequence is SMSNSSSGPHSSHNNSSNSNNNGS. Positions 404 to 460 constitute an HTH myb-type domain; it reads RKPKAKRTWSKEEEEALVEGLKEVGPSWSKILDLYGPGGKITENLKNRTQVQLKDKA. The H-T-H motif DNA-binding region spans 431 to 456; that stretch reads WSKILDLYGPGGKITENLKNRTQVQL. Positions 495-562 are disordered; sequence FSQSPNSSTI…GFDPHLEDGM (68 aa). Polar residues-rich tracts occupy residues 496–522 and 532–552; these read SQSP…ATED and GQNS…SDNT.

Homodimer.

The protein resides in the nucleus. The protein localises to the chromosome. It localises to the telomere. Binds the telomeric double-stranded TTAGGG repeat and negatively regulates telomere length. Involved in the regulation of gene expression. 52 binding sites have been identified, distributed over 15 chromosomes. A member of the general regulatory factors (GRFs) which act as genome partitioners. Acts as a chromatin insulator which are known as STARs (Subtelomeric anti-silencing region). STARs prevent negative or positive transcription influence by extending across chromatin to a promoter. The sequence is that of Protein TBF1 (TBF1) from Saccharomyces cerevisiae (strain ATCC 204508 / S288c) (Baker's yeast).